Here is a 338-residue protein sequence, read N- to C-terminus: DNA-directed RNA polymerase subunit alpha (338 aa).

The interval 1 to 234 (MIQKNWQELI…DQLQLFINFE (234 aa)) is alpha N-terminal domain (alpha-NTD). The tract at residues 250–338 (FNKNLLRKVD…ELAKKLEEPY (89 aa)) is alpha C-terminal domain (alpha-CTD).

This sequence belongs to the RNA polymerase alpha chain family. Homodimer. The RNAP catalytic core consists of 2 alpha, 1 beta, 1 beta' and 1 omega subunit. When a sigma factor is associated with the core the holoenzyme is formed, which can initiate transcription.

It catalyses the reaction RNA(n) + a ribonucleoside 5'-triphosphate = RNA(n+1) + diphosphate. In terms of biological role, DNA-dependent RNA polymerase catalyzes the transcription of DNA into RNA using the four ribonucleoside triphosphates as substrates. This is DNA-directed RNA polymerase subunit alpha from Paramagnetospirillum magneticum (strain ATCC 700264 / AMB-1) (Magnetospirillum magneticum).